Consider the following 226-residue polypeptide: tRNA (guanine-N(1)-)-methyltransferase (226 aa).

S-adenosyl-L-methionine is bound by residues glycine 112 and 132–137 (IGDYVL).

It belongs to the RNA methyltransferase TrmD family. As to quaternary structure, homodimer.

It localises to the cytoplasm. It carries out the reaction guanosine(37) in tRNA + S-adenosyl-L-methionine = N(1)-methylguanosine(37) in tRNA + S-adenosyl-L-homocysteine + H(+). In terms of biological role, specifically methylates guanosine-37 in various tRNAs. The chain is tRNA (guanine-N(1)-)-methyltransferase from Christiangramia forsetii (strain DSM 17595 / CGMCC 1.15422 / KT0803) (Gramella forsetii).